Consider the following 138-residue polypeptide: Histone H3 (138 aa).

The tract at residues 1–49 (MARTKQTARKSTGGKAPRKQLATKAARKQAPSQVSGGVKKPHRYRPGTV) is disordered. N6,N6,N6-trimethyllysine; alternate is present on lysine 5. The residue at position 5 (lysine 5) is an N6,N6-dimethyllysine; alternate. 2 positions are modified to N6-methyllysine; alternate: lysine 5 and lysine 10. At lysine 10 the chain carries N6-acetyllysine; alternate. Residue serine 11 is modified to Phosphoserine. Residue lysine 15 is modified to N6,N6-dimethyllysine; alternate. N6-methyllysine; alternate is present on residues lysine 15, lysine 19, lysine 24, lysine 28, and lysine 39. An N6-acetyllysine; alternate mark is found at lysine 15, lysine 19, lysine 24, lysine 28, and lysine 39. An N6,N6,N6-trimethyllysine; alternate mark is found at lysine 28 and lysine 39. Residues lysine 28 and lysine 39 each carry the N6,N6-dimethyllysine; alternate modification. 2 positions are modified to N6-acetyllysine: lysine 59 and lysine 67. Residue lysine 82 is modified to N6,N6,N6-trimethyllysine; alternate. N6,N6-dimethyllysine; alternate is present on lysine 82. An N6-methyllysine; alternate modification is found at lysine 82.

Belongs to the histone H3 family. In terms of assembly, the nucleosome is a histone octamer containing two molecules each of H2A, H2B, H3 and H4 assembled in one H3-H4 heterotetramer and two H2A-H2B heterodimers. The octamer wraps approximately 147 bp of DNA. Phosphorylated to form H3S10ph. H3S10ph promotes subsequent H3K14ac formation and is required for transcriptional activation through TBP recruitment to the promoters. In terms of processing, mono-, di- and trimethylated by the COMPASS complex to form H3K4me1/2/3. H3K4me activates gene expression by regulating transcription elongation and plays a role in telomere length maintenance. H3K4me enrichment correlates with transcription levels, and occurs in a 5' to 3' gradient with H3K4me3 enrichment at the 5'-end of genes, shifting to H3K4me2 and then H3K4me1. Methylated by SET2 to form H3K36me. H3K36me represses gene expression. Methylated by DOT1 to form H3K79me. H3K79me is required for association of SIR proteins with telomeric regions and for telomeric silencing. The COMPASS-mediated formation of H3K4me2/3 and the DOT1-mediated formation of H3K79me require H2BK123ub1. Post-translationally, acetylation of histone H3 leads to transcriptional activation. H3K14ac formation by GCN5 is promoted by H3S10ph. H3K14ac can also be formed by ESA1. H3K56ac formation occurs predominantly in newly synthesized H3 molecules during G1, S and G2/M of the cell cycle and may be involved in DNA repair.

It localises to the nucleus. It is found in the chromosome. In terms of biological role, core component of nucleosome. Nucleosomes wrap and compact DNA into chromatin, limiting DNA accessibility to the cellular machineries which require DNA as a template. Histones thereby play a central role in transcription regulation, DNA repair, DNA replication and chromosomal stability. DNA accessibility is regulated via a complex set of post-translational modifications of histones, also called histone code, and nucleosome remodeling. The sequence is that of Histone H3 (HHT1) from Cryptococcus neoformans var. neoformans serotype D (strain B-3501A) (Filobasidiella neoformans).